The primary structure comprises 769 residues: MASISHSSLALGGASSASASDYLRSSSNGVNGVPLKTLGRAVFTTIRRKDLAVTSRLKKGKKFEHPWPANPDPNVKGGVLSYLAEFKPLGDTQKPVTLDFEKPLVELEKKIVDVRKMANETGLDFTEQIITLENKYRQALKDLYTHLTPIQRVNIARHPNRPTFLDHIHNITDKFMELHGDRAGYDDPAIVTGIGTIDGKRYMFIGHQKGRNTKENIMRNFGMPTPHGYRKALRMMYYADHHGFPIVTFIDTPGAYADLKSEELGQGEAIANNLRTMFGLKVPILSIVIGEGGSGGALAIGCANKMLMLENAVFYVASPEACAAILWKTSKAAPEAAEKLRITSKELVKLNVADGIIPEPLGGAHADPSWTSQQIKIAINENMNEFGKMSGEELLKHRMAKYRKIGVFIEGEPIEPSRKINMKKREAVFSDSRKLQGEVDKLKEQILKAKETSTEAEPSSEVLNEMIEKLKSEIDDEYTEAAIAVGLEERLTAMREEFSKASSEEHLMHPVLIEKIEKLKEEFNTRLTDAPNYESLKSKLNMLRDFSRAKAASEATSLKKEINKRFQEAVDRPEIREKVEAIKAEVASSGASSFDELPDALKEKVLKTKGEVEAEMAGVLKSMGLELDAVKQNQKDTAEQIYAANENLQEKLEKLNQEITSKIEEVVRTPEIKSMVELLKVETAKASKTPGVTEAYQKIEALEQQIKQKIAEALNTSGLQEKQDELEKELAAARELAAEESDGSVKEDDDDDEDSSESGKSEMVNPSFA.

The N-terminal 54 residues, 1-54, are a transit peptide targeting the chloroplast; it reads MASISHSSLALGGASSASASDYLRSSSNGVNGVPLKTLGRAVFTTIRRKDLAVT. The CoA carboxyltransferase C-terminal domain occupies 132–385; sequence LENKYRQALK…KIAINENMNE (254 aa). 2 coiled-coil regions span residues 426-504 and 631-744; these read EAVF…ASSE and KQNQ…SDGS. Positions 718–769 are disordered; that stretch reads GLQEKQDELEKELAAARELAAEESDGSVKEDDDDDEDSSESGKSEMVNPSFA. Over residues 721–732 the composition is skewed to basic and acidic residues; the sequence is EKQDELEKELAA. Residues 738 to 756 are compositionally biased toward acidic residues; sequence AEESDGSVKEDDDDDEDSS. The residue at position 741 (Ser-741) is a Phosphoserine.

This sequence belongs to the AccA family. As to quaternary structure, acetyl-CoA carboxylase is a heterohexamer composed of biotin carboxyl carrier protein, biotin carboxylase and two subunits each of ACCase subunit alpha and ACCase plastid-coded subunit beta (accD). In terms of tissue distribution, accumulates in fatty acids synthesizing tissues such as embryos, expanding leaves, flower buds, flowers, and developing siliques.

The protein resides in the plastid. It localises to the chloroplast inner membrane. It carries out the reaction N(6)-carboxybiotinyl-L-lysyl-[protein] + acetyl-CoA = N(6)-biotinyl-L-lysyl-[protein] + malonyl-CoA. The protein operates within lipid metabolism; malonyl-CoA biosynthesis; malonyl-CoA from acetyl-CoA: step 1/1. Its function is as follows. Component of the acetyl coenzyme A carboxylase (ACC) complex. First, biotin carboxylase catalyzes the carboxylation of biotin on its carrier protein (BCCP) and then the CO(2) group is transferred by the carboxyltransferase to acetyl-CoA to form malonyl-CoA. In Arabidopsis thaliana (Mouse-ear cress), this protein is Acetyl-coenzyme A carboxylase carboxyl transferase subunit alpha, chloroplastic (CAC3).